A 279-amino-acid polypeptide reads, in one-letter code: DegV domain-containing protein lin1977 (279 aa).

The DegV domain occupies 4–278 (IKIITDSTAG…TGAFAFMYYT (275 aa)). Residues S62 and S94 each contribute to the hexadecanoate site.

In terms of biological role, may bind long-chain fatty acids, such as palmitate, and may play a role in lipid transport or fatty acid metabolism. This chain is DegV domain-containing protein lin1977, found in Listeria innocua serovar 6a (strain ATCC BAA-680 / CLIP 11262).